Reading from the N-terminus, the 522-residue chain is MTKLTDEVKKRRTFAIISHPDAGKTTITEQMLLFGGVIRSAGTVKARKSGHYATSDWMAIEKKRGISVTSSVMQFEYQGKRINILDTPGHQDFSEDTYRTLMAVDAAVMVIDSAKGIEPQTKKLFKVVKKRGIPIFTFMNKLDRDGREPLDLIAELEDLLGIEGVAMNWPIGMGKQLKGLYDIANNRVELYRKDEDDRYLPLDENGKLSEDEALAQDSLYQSTLDDIDLLKEAGNTFDKDKILRGDQTPVFFGSALTNFGVETFLDSFVNLAPAPQEHVVNEDEKLAADDPEFSGFVFKIQANMNPNHRDRIAFVRIGSGEFKKGIDVTLARTGKPVRLNNATEFMSSERVQVSDAVAGDIVGLYDTGNFQIGDSIYAGKKKIVYPELPQFTPEIFMRVTAKNVMKQKSFHKGMNQLVQEGAIQLYRGYSTDDYILGAVGQLQFEVFSFRMKNEYNSEVELHTLGNRVARWINPDQLDPKMSSSRNLLVKDRDGEPLFLFENAFAERWFKDKYPDVELTSRL.

One can recognise a tr-type G domain in the interval 9 to 276 (KKRRTFAIIS…SFVNLAPAPQ (268 aa)). GTP-binding positions include 18–25 (SHPDAGKT), 86–90 (DTPGH), and 140–143 (NKLD).

Belongs to the TRAFAC class translation factor GTPase superfamily. Classic translation factor GTPase family. PrfC subfamily.

It localises to the cytoplasm. In terms of biological role, increases the formation of ribosomal termination complexes and stimulates activities of RF-1 and RF-2. It binds guanine nucleotides and has strong preference for UGA stop codons. It may interact directly with the ribosome. The stimulation of RF-1 and RF-2 is significantly reduced by GTP and GDP, but not by GMP. The sequence is that of Peptide chain release factor 3 from Lactobacillus johnsonii (strain CNCM I-12250 / La1 / NCC 533).